An 862-amino-acid polypeptide reads, in one-letter code: Putative cargo-transport protein ypp1 (862 aa).

3 TPR repeats span residues 342-377, 460-493, and 494-527; these read QQIF…KSHE, SFMY…QPTN, and TNAL…NPKY. Residues serine 632, serine 633, and serine 637 each carry the phosphoserine modification. 4 TPR repeats span residues 665–698, 705–738, 740–772, and 814–847; these read ILGF…RRGK, QKLW…DHEC, WVYY…DPED, and PEAW…ADTN.

It belongs to the YPP1 family.

It localises to the cytoplasm. Functionally, involved in endocytosis. The polypeptide is Putative cargo-transport protein ypp1 (ypp1) (Schizosaccharomyces pombe (strain 972 / ATCC 24843) (Fission yeast)).